A 332-amino-acid chain; its full sequence is Solute carrier family 25 member 16 (332 aa).

Solcar repeat units follow at residues 34 to 120, 128 to 216, and 238 to 328; these read FYWL…YKTF, SGHV…LKSV, and LKTH…MKQF. 6 consecutive transmembrane segments (helical) span residues 37–57, 88–108, 134–154, 191–211, 244–264, and 299–319; these read LRSFLAGGIAGCCAKTTVAPL, GYLGLYKGNGAMMIRIFPYGA, LMAGSMAGMTAVICTYPLDVV, GLMPTILGMAPYAGVSFFTFG, LLCGGVAGAIAQTISYPFDVT, and GLYRGLSLNYIRCIPSQAVAF.

The protein belongs to the mitochondrial carrier (TC 2.A.29) family.

The protein resides in the mitochondrion inner membrane. May be involved in the transport of coenzyme A in the mitochondrial matrix. Very little is known about the physiological function of this carrier. The polypeptide is Solute carrier family 25 member 16 (Mus musculus (Mouse)).